The primary structure comprises 358 residues: Sulfate/thiosulfate import ATP-binding protein CysA 1 (358 aa).

The 235-residue stretch at 3–237 folds into the ABC transporter domain; that stretch reads IQVENIRKAF…PASAFVYGFL (235 aa). Residue 35-42 participates in ATP binding; the sequence is GPSGCGKT.

The protein belongs to the ABC transporter superfamily. Sulfate/tungstate importer (TC 3.A.1.6) family. The complex is composed of two ATP-binding proteins (CysA), two transmembrane proteins (CysT and CysW) and a solute-binding protein (CysP).

It is found in the cell inner membrane. It catalyses the reaction sulfate(out) + ATP + H2O = sulfate(in) + ADP + phosphate + H(+). It carries out the reaction thiosulfate(out) + ATP + H2O = thiosulfate(in) + ADP + phosphate + H(+). Part of the ABC transporter complex CysAWTP involved in sulfate/thiosulfate import. Responsible for energy coupling to the transport system. This chain is Sulfate/thiosulfate import ATP-binding protein CysA 1, found in Chromobacterium violaceum (strain ATCC 12472 / DSM 30191 / JCM 1249 / CCUG 213 / NBRC 12614 / NCIMB 9131 / NCTC 9757 / MK).